Consider the following 1352-residue polypeptide: MSSKSQQPPTGLSKSAAKKRAKKAAKQSQNPQPQSAPQTSSQTPASVPPLPPASVPDPLDPAFFNFPGPGSYPIDVQYDDTAYYDQVDVPLNQGDFPGSYSIDYNLSLQNGSQLAGLSAPFNITHDDLISAANELYKRMADPEFGSDDAYWSSLPPHIRQFIRDAVPFTGSISQSTPGTTSSQRTMYQMAQQIVQAASQGMGLGHGMSANLMPGINANARSFPSPQQTIGEEFGFHRHPDTREEEYDDEEEIEEDQGHPAANGDAPKKKNKKKKKKGANAASLSAPVEPPAPLPPLPPPSTLSKIPRAPAPVPQPQLPTHQPQPLSQQPPSLNPLPPPAPASAPTPTPPSSRAAGKQPMGTNPPANPPARSARAAGKAPASAAPPHNAHAGHSHNHPSTAKPAPKGKSPATAPPAKIWTQSSAEDRENIRVFWLGLSEAERRDLLRIEKDAVLKKMKEQHRHSCGCAVCGRKKVNIEMELDQLYEQYYDELRSYAAEQRVAANGLRPPPSGAGPFPGSVEVDASGTVTQYDHRAPELHDHDPDDLDGEESEEYDDDDDYADDDELDDDDIGTDEADVGDEIDEPPPPPPITHRQQPRRPPVKAPPRSEGGDDFLSFGSNLATIKGILTIADDMLKNDGTKFLEMMEQLAIRRSVREEQNLRDMQEETDEEEEEEDDDESRDEPMTEKERAEEGKRMFQIFAARMFEQRVLQAYRERVAKQREEQLLRELEEEEDSKRAKEEKKAKEAQKKKDKKKAQKQKAEEERLAREAALEEEKRQAKLRKEEAERERMRRQDEERVRREAVKRAAQEEAQRQALERKRRQQEEKEREEEAAKKKREREEKAKKEREARENELKEKERKEREIKAAKEKAEKERIAKETLEKAERDRLAKEAKEKAEKIRQERLEASRMEKVRKEEAARKEREAVEQAKIIAAQQAQRERAAKAEKNTADKAAAERISAARVIPVAATAPVLATLGLKSPSKGSTPQSAPPVPQLSPVKGAARPITNATPGRSMQKTPTAYYPQPVPPVGVASFSRMPLAQSFGPPGLRPAYPTGSPAYSPPRANGSSISPNPPSRGFTDPSPPGFDHNLRTAPIGVGFPPVKPSGRIPSMADDAFSPTAPIGVPVTRSVSSAGEMGSLISGSVTPDDYRPTPPAPIAPPNLGPIGRPSFSDGQTSGPNVLRSTSPPPPDRVLGSAALGADDEIVQPQQRRPTTSWDMPTAAPGSGRWSASPSIWGSGDPTPAPSWGAPGSMPTVAERPGPPPGLSLSPGAGVNVLGQRQPSFGGIGSSFGGVGAVGSVIGGGMGGTAGSGLVQGHVGGGGYSQGLFSPQHQQQQQLQLQLQLQQQQQQQ.

Residues 1–12 (MSSKSQQPPTGL) show a composition bias toward polar residues. Disordered regions lie at residues 1–66 (MSSK…FFNF), 216–422 (NANA…TQSS), 503–522 (NGLR…VEVD), 531–616 (DHRA…FLSF), 651–693 (RRSV…AEEG), 726–880 (LREL…IAKE), 978–1118 (GLKS…DDAF), 1139–1275 (GSLI…GAGV), and 1307–1336 (GGTA…HQQQ). The segment covering 16 to 25 (AAKKRAKKAA) has biased composition (basic residues). Residues 26-45 (KQSQNPQPQSAPQTSSQTPA) are compositionally biased toward low complexity. Residues 46–59 (SVPPLPPASVPDPL) show a composition bias toward pro residues. The segment covering 218–229 (NARSFPSPQQTI) has biased composition (polar residues). Acidic residues predominate over residues 242–254 (REEEYDDEEEIEE). A compositionally biased stretch (basic residues) spans 268–277 (KKNKKKKKKG). Residues 287–300 (VEPPAPLPPLPPPS) show a composition bias toward pro residues. Residues 317 to 330 (LPTHQPQPLSQQPP) show a composition bias toward low complexity. Pro residues predominate over residues 331 to 349 (SLNPLPPPAPASAPTPTPP). Low complexity predominate over residues 368 to 388 (PARSARAAGKAPASAAPPHNA). The span at 531–541 (DHRAPELHDHD) shows a compositional bias: basic and acidic residues. Positions 542–583 (PDDLDGEESEEYDDDDDYADDDELDDDDIGTDEADVGDEIDE) are enriched in acidic residues. Over residues 653 to 664 (SVREEQNLRDMQ) the composition is skewed to basic and acidic residues. Over residues 665-680 (EETDEEEEEEDDDESR) the composition is skewed to acidic residues. Basic and acidic residues-rich tracts occupy residues 681-693 (DEPM…AEEG), 726-749 (LREL…EAQK), and 759-880 (QKAE…IAKE). Residues 712–943 (AYRERVAKQR…AAQQAQRERA (232 aa)) adopt a coiled-coil conformation. A compositionally biased stretch (polar residues) spans 1008-1020 (TNATPGRSMQKTP). A compositionally biased stretch (pro residues) spans 1153–1164 (PTPPAPIAPPNL). Composition is skewed to polar residues over residues 1173–1186 (SDGQ…LRST) and 1208–1219 (QPQQRRPTTSWD).

The protein belongs to the NST1 family.

Its subcellular location is the cytoplasm. May act as a negative regulator of salt tolerance. In Cryptococcus neoformans var. neoformans serotype D (strain JEC21 / ATCC MYA-565) (Filobasidiella neoformans), this protein is Stress response protein NST1 (NST1).